Reading from the N-terminus, the 568-residue chain is MKWKEKLGDGVYDTFMMIDETKCPPCSNVLCNPSEPPPPRRLNMTTEKFIRDHTQHFLDGGEMKVEQLFQEFGNRKSNTVQSDGISDSEKCSPTVSQGKSSDCLNTVKSNSSSKAPKVVPLTPEQALKQYKHHLTAYEKLEIINYPEIYFVGPNAKKRHGVIGGPNNGGYDDADGAYIHVPRDHLAYRYEVLKIIGKGSFGQVARVYDHKLRQYVALKMVRNEKRFHRQAAEEIRILEHLKKQDKTGSMNVIHMLESFTFRNHVCMAFELLSIDLYELIKKNKFQGFSVQLVRKFAQSILQSLDALHKNKIIHCDLKPENILLKHHGRSSTKVIDFGSSCFEYQKLYTYIQSRFYRAPEIILGSRYSTPIDIWSFGCILAELLTGQPLFPGEDEGDQLACMMELLGMPPPKLLEQSKRAKYFINSKGIPRYCSVTTQADGRVVLVGGRSRRGKKRGPPGSKDWGTALKGCDDYLFIEFLKRCLHWDPSARLTPAQALRHPWISKSVPRPLTTIDKVSGKRIVNPASAFQGLGSKLPPVVGIANKLKANLMSETNGSIPLCSVLPKLIS.

The disordered stretch occupies residues 1–168 (MKWKEKLGDG…HGVIGGPNNG (168 aa)). The segment covering 77 to 114 (SNTVQSDGISDSEKCSPTVSQGKSSDCLNTVKSNSSSK) has biased composition (polar residues). A Protein kinase domain is found at 189–502 (YEVLKIIGKG…PAQALRHPWI (314 aa)). Residues 195 to 203 (IGKGSFGQV) and Lys218 each bind ATP. Asp315 (proton acceptor) is an active-site residue. Ser330 is modified (phosphoserine). The residue at position 349 (Tyr349) is a Phosphotyrosine. Positions 448–461 (RSRRGKKRGPPGSK) match the Nuclear localization signal motif.

It belongs to the protein kinase superfamily. CMGC Ser/Thr protein kinase family. MNB/DYRK subfamily. As to quaternary structure, interacts with SIRT1. Mg(2+) is required as a cofactor. Protein kinase activity is activated following autophosphorylation at Tyr-349. Autophosphorylation at Ser-330 stabilizes the protein and enhances the protein kinase activity. Post-translationally, ubiquitinated at anaphase by the anaphase-promoting complex (APC/C), leading to its degradation by the proteasome.

It is found in the nucleus. The protein resides in the cytoplasm. Its subcellular location is the nucleus speckle. The protein localises to the cytoplasmic granule. It localises to the cytoskeleton. It is found in the microtubule organizing center. The protein resides in the centrosome. The catalysed reaction is L-seryl-[protein] + ATP = O-phospho-L-seryl-[protein] + ADP + H(+). It catalyses the reaction L-threonyl-[protein] + ATP = O-phospho-L-threonyl-[protein] + ADP + H(+). It carries out the reaction L-tyrosyl-[protein] + ATP = O-phospho-L-tyrosyl-[protein] + ADP + H(+). With respect to regulation, protein kinase activity is activated following autophosphorylation at Tyr-349. In terms of biological role, dual-specificity protein kinase that promotes disassembly of several types of membraneless organelles during mitosis, such as stress granules, nuclear speckles and pericentriolar material. Dual-specificity tyrosine-regulated kinases (DYRKs) autophosphorylate a critical tyrosine residue in their activation loop and phosphorylate their substrate on serine and threonine residues. Acts as a central dissolvase of membraneless organelles during the G2-to-M transition, after the nuclear-envelope breakdown: acts by mediating phosphorylation of multiple serine and threonine residues in unstructured domains of proteins, such as SRRM1 and PCM1. Does not mediate disassembly of all membraneless organelles: disassembly of P-body and nucleolus is not regulated by DYRK3. Dissolution of membraneless organelles at the onset of mitosis is also required to release mitotic regulators, such as ZNF207, from liquid-unmixed organelles where they are sequestered and keep them dissolved during mitosis. Regulates mTORC1 by mediating the dissolution of stress granules: during stressful conditions, DYRK3 partitions from the cytosol to the stress granule, together with mTORC1 components, which prevents mTORC1 signaling. When stress signals are gone, the kinase activity of DYRK3 is required for the dissolution of stress granule and mTORC1 relocation to the cytosol: acts by mediating the phosphorylation of the mTORC1 inhibitor AKT1S1, allowing full reactivation of mTORC1 signaling. Also acts as a negative regulator of EPO-dependent erythropoiesis: may place an upper limit on red cell production during stress erythropoiesis. Inhibits cell death due to cytokine withdrawal in hematopoietic progenitor cells. Promotes cell survival upon genotoxic stress through phosphorylation of SIRT1: this in turn inhibits p53/TP53 activity and apoptosis. The polypeptide is Dual specificity tyrosine-phosphorylation-regulated kinase 3 (Macaca fascicularis (Crab-eating macaque)).